We begin with the raw amino-acid sequence, 424 residues long: MKVRILNEPINVELSRIAADKSISHRCAIFSLLSDKPSHVRNYLKAGDTLNTLDIVRTLGAQIQERGEEVIITPPEKILEPDVVLECGNSGTSMRLFMGLLAAQDGFFVLSGDKYLNRRPMARVAKPLVAVGAKIDGANEANTAPLCIRGKKLERFKYDSPVASAQVKSALLLAALYSNGCEFSEPELSRDHTERMLKGMGAKIKTQGASIALEPMSTPLAPLDIDVPNDPSSAFFFAVAACIIPNSHIVLKNVLLNETRIEAYKILQKMGADIKFKEISGKYESIGDIEIRYAALNAVEVSENISWLIDEAPALAIAFANAKGTSVLKNAKELRVKECDRIAVTVAGLKKCGIKARELEDGFEVSGSDASCAIIDSHGDHRIAMSFAVLGLKCGMIIEKSEFIATSFPNFVSILRKIGASVED.

Residues lysine 21, serine 22, and arginine 26 each contribute to the 3-phosphoshikimate site. Residue lysine 21 participates in phosphoenolpyruvate binding. Phosphoenolpyruvate-binding residues include glycine 91 and arginine 119. Residues serine 164, glutamine 166, aspartate 310, and lysine 337 each coordinate 3-phosphoshikimate. Glutamine 166 lines the phosphoenolpyruvate pocket. The Proton acceptor role is filled by aspartate 310. Residues arginine 341 and arginine 382 each contribute to the phosphoenolpyruvate site.

The protein belongs to the EPSP synthase family. Monomer.

The protein localises to the cytoplasm. The enzyme catalyses 3-phosphoshikimate + phosphoenolpyruvate = 5-O-(1-carboxyvinyl)-3-phosphoshikimate + phosphate. It participates in metabolic intermediate biosynthesis; chorismate biosynthesis; chorismate from D-erythrose 4-phosphate and phosphoenolpyruvate: step 6/7. Catalyzes the transfer of the enolpyruvyl moiety of phosphoenolpyruvate (PEP) to the 5-hydroxyl of shikimate-3-phosphate (S3P) to produce enolpyruvyl shikimate-3-phosphate and inorganic phosphate. This is 3-phosphoshikimate 1-carboxyvinyltransferase from Campylobacter curvus (strain 525.92).